The following is a 190-amino-acid chain: Small ribosomal subunit protein uS4 (190 aa).

Residues 105–181 (RRLQTLVYKL…RKKAKAAEGG (77 aa)) enclose the S4 RNA-binding domain. Positions 163-190 (GGGRPGRVRRKKAKAAEGGDGDAEEDEE) are disordered. Acidic residues predominate over residues 181-190 (GDGDAEEDEE).

It belongs to the universal ribosomal protein uS4 family.

The sequence is that of Small ribosomal subunit protein uS4 (RPS9) from Podospora anserina (Pleurage anserina).